A 108-amino-acid polypeptide reads, in one-letter code: Cell wall protein PGA48 (108 aa).

Positions methionine 1–alanine 17 are cleaved as a signal peptide. N-linked (GlcNAc...) asparagine glycosylation is found at asparagine 18, asparagine 41, and asparagine 77. Asparagine 84 carries GPI-anchor amidated asparagine lipidation. Residues glycine 85–isoleucine 108 constitute a propeptide, removed in mature form.

This sequence belongs to the SED1 family. The GPI-anchor is attached to the protein in the endoplasmic reticulum and serves to target the protein to the cell surface. There, the glucosamine-inositol phospholipid moiety is cleaved off and the GPI-modified mannoprotein is covalently attached via its lipidless GPI glycan remnant to the 1,6-beta-glucan of the outer cell wall layer.

It localises to the secreted. The protein localises to the cell wall. It is found in the membrane. Cell wall protein that plays a role in adaptation and resistance to cell wall stress. In Candida albicans (strain SC5314 / ATCC MYA-2876) (Yeast), this protein is Cell wall protein PGA48 (PGA48).